The chain runs to 205 residues: GTP cyclohydrolase-2 (205 aa).

49–53 contributes to the GTP binding site; that stretch reads RLHSE. Positions 54, 65, and 67 each coordinate Zn(2+). Residues Q70, 92–94, and T114 each bind GTP; that span reads EGR. Residue D126 is the Proton acceptor of the active site. The Nucleophile role is filled by R128. T149 and K154 together coordinate GTP.

The protein belongs to the GTP cyclohydrolase II family. The cofactor is Zn(2+).

The catalysed reaction is GTP + 4 H2O = 2,5-diamino-6-hydroxy-4-(5-phosphoribosylamino)-pyrimidine + formate + 2 phosphate + 3 H(+). The protein operates within cofactor biosynthesis; riboflavin biosynthesis; 5-amino-6-(D-ribitylamino)uracil from GTP: step 1/4. Catalyzes the conversion of GTP to 2,5-diamino-6-ribosylamino-4(3H)-pyrimidinone 5'-phosphate (DARP), formate and pyrophosphate. The chain is GTP cyclohydrolase-2 from Pseudomonas putida (strain ATCC 700007 / DSM 6899 / JCM 31910 / BCRC 17059 / LMG 24140 / F1).